The chain runs to 445 residues: Phosphoglucosamine mutase 1 (445 aa).

S102 functions as the Phosphoserine intermediate in the catalytic mechanism. Mg(2+) is bound by residues S102, D241, D243, and D245. S102 is subject to Phosphoserine.

The protein belongs to the phosphohexose mutase family. It depends on Mg(2+) as a cofactor. Post-translationally, activated by phosphorylation.

It catalyses the reaction alpha-D-glucosamine 1-phosphate = D-glucosamine 6-phosphate. Catalyzes the conversion of glucosamine-6-phosphate to glucosamine-1-phosphate. This chain is Phosphoglucosamine mutase 1, found in Shewanella sp. (strain MR-7).